The following is a 299-amino-acid chain: Mitochondrial 2-oxodicarboxylate carrier (299 aa).

Solcar repeat units follow at residues 11 to 100 (NEAS…YKKL), 107 to 196 (SPAL…VKNI), and 205 to 294 (LEFL…TYSW). Transmembrane regions (helical) follow at residues 17–37 (ILAGGSAGLVEICLMHPLDVV), 62–82 (MIFRTEGLFGFYKGILPPILA), 100–120 (LLGYVSLSPALTFAVAGLGSG), 179–199 (HGVFNMVYFGFYFNVKNIIPV), 211–231 (FGIGLLSGTIASVINIPFDVA), and 274–290 (IMRLGPGGAVMLLVYEY).

The protein belongs to the mitochondrial carrier (TC 2.A.29) family.

The protein localises to the mitochondrion inner membrane. The catalysed reaction is 2-oxoadipate(in) + 2-oxoglutarate(out) = 2-oxoadipate(out) + 2-oxoglutarate(in). It carries out the reaction hexanedioate(in) + 2-oxoglutarate(out) = hexanedioate(out) + 2-oxoglutarate(in). The enzyme catalyses L-2-aminoadipate(in) + 2-oxoglutarate(out) = L-2-aminoadipate(out) + 2-oxoglutarate(in). It catalyses the reaction glutarate(in) + 2-oxoglutarate(out) = glutarate(out) + 2-oxoglutarate(in). The catalysed reaction is 2-oxoheptanedioate(in) + 2-oxoglutarate(out) = 2-oxoheptanedioate(out) + 2-oxoglutarate(in). It carries out the reaction heptanedioate(in) + 2-oxoglutarate(out) = heptanedioate(out) + 2-oxoglutarate(in). The enzyme catalyses citrate(in) + 2-oxoglutarate(out) = citrate(out) + 2-oxoglutarate(in). Functionally, transports dicarboxylates across the inner membranes of mitochondria by a counter-exchange mechanism. Can transport 2-oxoadipate (2-oxohexanedioate), 2-oxoglutarate, adipate (hexanedioate), glutarate, and to a lesser extent, pimelate (heptanedioate), 2-oxopimelate (2-oxoheptanedioate), 2-aminoadipate (2-aminohexanedioate), oxaloacetate, and citrate. Plays a central role in catabolism of lysine, hydroxylysine, and tryptophan, by transporting common metabolite intermediates (such as 2-oxoadipate) into the mitochondria, where it is converted into acetyl-CoA and can enter the citric acid (TCA) cycle. The chain is Mitochondrial 2-oxodicarboxylate carrier (SLC25A21) from Bos taurus (Bovine).